The chain runs to 347 residues: GTP 3',8-cyclase (347 aa).

Positions 10–242 (RLNRPIGVLR…ERINARWPLE (233 aa)) constitute a Radical SAM core domain. A GTP-binding site is contributed by arginine 19. 2 residues coordinate [4Fe-4S] cluster: cysteine 26 and cysteine 30. Residue tyrosine 32 coordinates S-adenosyl-L-methionine. Residue cysteine 33 participates in [4Fe-4S] cluster binding. Residue arginine 65 coordinates GTP. Position 69 (glycine 69) interacts with S-adenosyl-L-methionine. A GTP-binding site is contributed by threonine 104. Serine 129 contacts S-adenosyl-L-methionine. Lysine 178 is a GTP binding site. Methionine 212 contacts S-adenosyl-L-methionine. [4Fe-4S] cluster-binding residues include cysteine 275 and cysteine 278. 280–282 (RLR) contributes to the GTP binding site. Cysteine 292 contributes to the [4Fe-4S] cluster binding site.

The protein belongs to the radical SAM superfamily. MoaA family. Monomer and homodimer. The cofactor is [4Fe-4S] cluster.

The catalysed reaction is GTP + AH2 + S-adenosyl-L-methionine = (8S)-3',8-cyclo-7,8-dihydroguanosine 5'-triphosphate + 5'-deoxyadenosine + L-methionine + A + H(+). It participates in cofactor biosynthesis; molybdopterin biosynthesis. Catalyzes the cyclization of GTP to (8S)-3',8-cyclo-7,8-dihydroguanosine 5'-triphosphate. This chain is GTP 3',8-cyclase, found in Synechococcus sp. (strain CC9605).